The sequence spans 109 residues: Phosphocarrier protein HPr (109 aa).

The 88-residue stretch at 22–109 (ELSAVFTIRN…EVFNSGFGEL (88 aa)) folds into the HPr domain. His-36 (pros-phosphohistidine intermediate) is an active-site residue.

This sequence belongs to the HPr family.

The protein resides in the cytoplasm. Its function is as follows. General (non sugar-specific) component of the phosphoenolpyruvate-dependent sugar phosphotransferase system (sugar PTS). This major carbohydrate active-transport system catalyzes the phosphorylation of incoming sugar substrates concomitantly with their translocation across the cell membrane. The phosphoryl group from phosphoenolpyruvate (PEP) is transferred to the phosphoryl carrier protein HPr by enzyme I. Phospho-HPr then transfers it to the PTS EIIA domain. The chain is Phosphocarrier protein HPr (ptsH) from Chlamydia trachomatis serovar D (strain ATCC VR-885 / DSM 19411 / UW-3/Cx).